The sequence spans 250 residues: 4-hydroxy-tetrahydrodipicolinate reductase (250 aa).

Residues 9-14 (GATGKM), 79-81 (GTT), and 103-106 (SANM) contribute to the NAD(+) site. The active-site Proton donor/acceptor is the histidine 135. Histidine 136 is a (S)-2,3,4,5-tetrahydrodipicolinate binding site. Catalysis depends on lysine 139, which acts as the Proton donor. 145–146 (GT) contributes to the (S)-2,3,4,5-tetrahydrodipicolinate binding site.

This sequence belongs to the DapB family.

The protein localises to the cytoplasm. It carries out the reaction (S)-2,3,4,5-tetrahydrodipicolinate + NAD(+) + H2O = (2S,4S)-4-hydroxy-2,3,4,5-tetrahydrodipicolinate + NADH + H(+). The enzyme catalyses (S)-2,3,4,5-tetrahydrodipicolinate + NADP(+) + H2O = (2S,4S)-4-hydroxy-2,3,4,5-tetrahydrodipicolinate + NADPH + H(+). The protein operates within amino-acid biosynthesis; L-lysine biosynthesis via DAP pathway; (S)-tetrahydrodipicolinate from L-aspartate: step 4/4. Its function is as follows. Catalyzes the conversion of 4-hydroxy-tetrahydrodipicolinate (HTPA) to tetrahydrodipicolinate. The protein is 4-hydroxy-tetrahydrodipicolinate reductase of Rickettsia bellii (strain OSU 85-389).